A 478-amino-acid chain; its full sequence is NAD(+) hydrolase ThsA (478 aa).

The Deacetylase sirtuin-type domain occupies 1-287 (MDKKVLIKRF…SIRKKYLRKT (287 aa)). Residues A19, D110, and H148 each contribute to the NAD(+) site. H148 serves as the catalytic Proton acceptor. The SLOG (STALD) domain stretch occupies residues 288–478 (IFISGSAVDY…VSLINSIQED (191 aa)). The 3'cADPR site is built by G292, S293, L330, R373, K390, G401, and E405.

The protein belongs to the soluble Thoeris ThsA family. As to quaternary structure, homotetramer in solution.

The enzyme catalyses NAD(+) + H2O = ADP-D-ribose + nicotinamide + H(+). With respect to regulation, activated by 3'cADPR. NAD(+) hydrolyzing component (NADase) of the Thoeris antiviral defense system, composed of ThsA and ThsB (maybe AS248_15445). Activated by 3' cyclic ADP-D-ribose (3'cADPR) but not its isomers 2'cADPR, cADPR and very weakly by ADPR; binds 3'cADPR better than 2'cADPR. Upon activation binds and hydrolyzes NAD(+), leading to cell death and inhibition of phage replication. This Enterococcus faecium (Streptococcus faecium) protein is NAD(+) hydrolase ThsA.